A 645-amino-acid chain; its full sequence is 1,4-alpha-glucan branching enzyme GlgB (645 aa).

Residue Asp-309 is the Nucleophile of the active site. Residue Glu-352 is the Proton donor of the active site. The disordered stretch occupies residues 619 to 645; it reads VKTRKGSKKQDGSKTKVRSNVTSRGKR. Residues 636–645 are compositionally biased toward polar residues; that stretch reads RSNVTSRGKR.

It belongs to the glycosyl hydrolase 13 family. GlgB subfamily. In terms of assembly, monomer.

It catalyses the reaction Transfers a segment of a (1-&gt;4)-alpha-D-glucan chain to a primary hydroxy group in a similar glucan chain.. It participates in glycan biosynthesis; glycogen biosynthesis. In terms of biological role, catalyzes the formation of the alpha-1,6-glucosidic linkages in glycogen by scission of a 1,4-alpha-linked oligosaccharide from growing alpha-1,4-glucan chains and the subsequent attachment of the oligosaccharide to the alpha-1,6 position. The polypeptide is 1,4-alpha-glucan branching enzyme GlgB (Bacillus cereus (strain G9842)).